A 220-amino-acid chain; its full sequence is Peptide methionine sulfoxide reductase MsrA (220 aa).

Residue Cys59 is part of the active site.

It belongs to the MsrA Met sulfoxide reductase family.

It catalyses the reaction L-methionyl-[protein] + [thioredoxin]-disulfide + H2O = L-methionyl-(S)-S-oxide-[protein] + [thioredoxin]-dithiol. The enzyme catalyses [thioredoxin]-disulfide + L-methionine + H2O = L-methionine (S)-S-oxide + [thioredoxin]-dithiol. In terms of biological role, has an important function as a repair enzyme for proteins that have been inactivated by oxidation. Catalyzes the reversible oxidation-reduction of methionine sulfoxide in proteins to methionine. The polypeptide is Peptide methionine sulfoxide reductase MsrA (Corynebacterium kroppenstedtii (strain DSM 44385 / JCM 11950 / CIP 105744 / CCUG 35717)).